The sequence spans 417 residues: GPI mannosyltransferase 2 (417 aa).

The next 9 membrane-spanning stretches (helical) occupy residues 10–30, 104–124, 142–162, 167–187, 206–226, 239–259, 312–332, 344–364, and 394–414; these read FLII…LVWL, IVLK…WIVY, LALT…LISV, IAFT…SFDV, FCFA…LFYV, ITSI…FVYF, IPNF…ITYF, YIWI…VQII, and YYVM…ACFL.

This sequence belongs to the PIGV family.

The protein localises to the endoplasmic reticulum membrane. The protein operates within glycolipid biosynthesis; glycosylphosphatidylinositol-anchor biosynthesis. In terms of biological role, mannosyltransferase involved in glycosylphosphatidylinositol-anchor biosynthesis. Transfers the second mannose to the glycosylphosphatidylinositol during GPI precursor assembly. This Kluyveromyces lactis (strain ATCC 8585 / CBS 2359 / DSM 70799 / NBRC 1267 / NRRL Y-1140 / WM37) (Yeast) protein is GPI mannosyltransferase 2 (GPI18).